Consider the following 958-residue polypeptide: Translation initiation factor IF-2 (958 aa).

A compositionally biased stretch (low complexity) spans 50 to 67; it reads FKPAAAPKVEAKPAAPKV. Disordered stretches follow at residues 50–224 and 288–374; these read FKPA…RIDF and EVVP…HELP. Composition is skewed to basic and acidic residues over residues 68–89, 96–118, and 138–153; these read SAEK…EEAK, SAEK…EAKP, and FKAE…AERR. The span at 157-169 shows a compositional bias: low complexity; sequence KGNNRDQQQNGNR. Basic and acidic residues-rich tracts occupy residues 185–195 and 290–323; these read RDNRRFNDQAK and VPEK…DGPR. Positions 337 to 346 are enriched in low complexity; the sequence is NQKNSNWNNN. Residues 365 to 374 show a composition bias toward basic and acidic residues; sequence VTERKFHELP. The 168-residue stretch at 460-627 folds into the tr-type G domain; sequence ERPPVVTIMG…TVLLVAEIQE (168 aa). The segment at 469–476 is G1; the sequence is GHVDHGKT. 469–476 is a GTP binding site; it reads GHVDHGKT. Residues 494–498 are G2; it reads GITQH. Residues 515 to 518 are G3; sequence DTPG. Residues 515-519 and 569-572 each bind GTP; these read DTPGH and NKID. Residues 569–572 are G4; it reads NKID. Residues 605–607 are G5; the sequence is SAK.

It belongs to the TRAFAC class translation factor GTPase superfamily. Classic translation factor GTPase family. IF-2 subfamily.

The protein localises to the cytoplasm. Functionally, one of the essential components for the initiation of protein synthesis. Protects formylmethionyl-tRNA from spontaneous hydrolysis and promotes its binding to the 30S ribosomal subunits. Also involved in the hydrolysis of GTP during the formation of the 70S ribosomal complex. The protein is Translation initiation factor IF-2 of Streptococcus pneumoniae serotype 4 (strain ATCC BAA-334 / TIGR4).